Consider the following 156-residue polypeptide: SCP2 sterol-binding domain-containing protein 1 (156 aa).

The 113-residue stretch at 44-156 (SFPVFQDIRL…ERVFKDWAKF (113 aa)) folds into the SCP2 domain.

In Homo sapiens (Human), this protein is SCP2 sterol-binding domain-containing protein 1 (SCP2D1).